Reading from the N-terminus, the 260-residue chain is Ribonuclease HII (260 aa).

Residues 70–260 (QAIAGIDEVG…PIKSMLKEKN (191 aa)) form the RNase H type-2 domain. Positions 76, 77, and 171 each coordinate a divalent metal cation.

Belongs to the RNase HII family. Requires Mn(2+) as cofactor. The cofactor is Mg(2+).

It is found in the cytoplasm. The catalysed reaction is Endonucleolytic cleavage to 5'-phosphomonoester.. Functionally, endonuclease that specifically degrades the RNA of RNA-DNA hybrids. This Streptococcus mutans serotype c (strain ATCC 700610 / UA159) protein is Ribonuclease HII.